We begin with the raw amino-acid sequence, 67 residues long: MCILKLPIVLLVLSVAVNHLQASPVESHQVEKRKCNTVTCATQRLANFLIHSSNNFGAIFSPPSVGS.

Residues 1 to 22 (MCILKLPIVLLVLSVAVNHLQA) form the signal peptide. A propeptide spanning residues 23 to 31 (SPVESHQVE) is cleaved from the precursor. Cysteines 35 and 40 form a disulfide.

The protein belongs to the calcitonin family. In terms of assembly, can form homodimers. Interacts with IDE and INS. Interaction with INS inhibits homodimerization and fibril formation.

It localises to the secreted. Amylin/IAPP is a glucoregulatory peptide hormone that plays an important role in the regulation of energy homeostasis. Selectively inhibits insulin-stimulated glucose utilization and glycogen deposition in muscle, while not affecting adipocyte glucose metabolism. IAPP function is mediated by the CALCR-RAMPs (AMYRs) receptor complexes. Amylin can also bind CALCR receptor in the absence of RAMPs, although it is more selective for AMYRs. This chain is Islet amyloid polypeptide (IAPP), found in Oryctolagus cuniculus (Rabbit).